The chain runs to 429 residues: CBL-interacting serine/threonine-protein kinase 7 (429 aa).

Positions 25–280 (YELGRRLGSG…IETVMKTNWF (256 aa)) constitute a Protein kinase domain. Residues 31 to 39 (LGSGSFAKV) and K54 each bind ATP. Residue D149 is the Proton acceptor of the active site. The segment at 167–195 (DFGLSALPEHLQNGLLHTACGTPAYTAPE) is activation loop. S171 carries the post-translational modification Phosphoserine. T184 is subject to Phosphothreonine. In terms of domain architecture, NAF spans 302–326 (SSVNSITAFDLISLSSGLDLSGLFE). The interval 330–363 (KKERRFTAKVSGVEVEEKAKMIGEKLGYVVKKKM) is PPI.

Belongs to the protein kinase superfamily. CAMK Ser/Thr protein kinase family. SNF1 subfamily. Interacts with CBL1, CBL2 and CBL3. Mn(2+) serves as cofactor. In terms of processing, autophosphorylated. In terms of tissue distribution, strongly expressed in leaves, but barely expressed in roots, stems or flowers.

The enzyme catalyses L-seryl-[protein] + ATP = O-phospho-L-seryl-[protein] + ADP + H(+). The catalysed reaction is L-threonyl-[protein] + ATP = O-phospho-L-threonyl-[protein] + ADP + H(+). Its function is as follows. CIPK serine-threonine protein kinases interact with CBL proteins. Binding of a CBL protein to the regulatory NAF domain of CIPK protein lead to the activation of the kinase in a calcium-dependent manner. Phosphorylates the rice sucrose synthase (SuSy) in vitro in an allosteric manner. Involved in cold response. In Arabidopsis thaliana (Mouse-ear cress), this protein is CBL-interacting serine/threonine-protein kinase 7 (CIPK7).